Here is a 267-residue protein sequence, read N- to C-terminus: Membrane-associated protein Vipp1 (267 aa).

A coiled-coil region spans residues 26–156 (EKVLEQAVID…KANAELQQTL (131 aa)). Positions 224–252 (GTSAATPQLEAAPVDSSVPANNASQDDAV) are disordered.

This sequence belongs to the PspA/Vipp/IM30 family.

The protein localises to the cell inner membrane. Its function is as follows. Required for thylakoid formation. The chain is Membrane-associated protein Vipp1 from Synechocystis sp. (strain ATCC 27184 / PCC 6803 / Kazusa).